The chain runs to 389 residues: Phospho-N-acetylmuramoyl-pentapeptide-transferase (389 aa).

10 helical membrane passes run 25-45 (RAVM…PWVI), 73-93 (TMGG…WGDL), 97-117 (FIWI…VDDY), 135-155 (FWQS…VSEA), 190-210 (ISYP…IVGA), 222-242 (GLVI…AYVM), 258-278 (GAGE…AFLW), 286-306 (VFMG…VAVI), 311-331 (IVLF…MLQV), and 366-386 (QVVV…LSTL).

It belongs to the glycosyltransferase 4 family. MraY subfamily. Mg(2+) is required as a cofactor.

It localises to the cell inner membrane. It carries out the reaction UDP-N-acetyl-alpha-D-muramoyl-L-alanyl-gamma-D-glutamyl-meso-2,6-diaminopimeloyl-D-alanyl-D-alanine + di-trans,octa-cis-undecaprenyl phosphate = di-trans,octa-cis-undecaprenyl diphospho-N-acetyl-alpha-D-muramoyl-L-alanyl-D-glutamyl-meso-2,6-diaminopimeloyl-D-alanyl-D-alanine + UMP. Its pathway is cell wall biogenesis; peptidoglycan biosynthesis. In terms of biological role, catalyzes the initial step of the lipid cycle reactions in the biosynthesis of the cell wall peptidoglycan: transfers peptidoglycan precursor phospho-MurNAc-pentapeptide from UDP-MurNAc-pentapeptide onto the lipid carrier undecaprenyl phosphate, yielding undecaprenyl-pyrophosphoryl-MurNAc-pentapeptide, known as lipid I. The polypeptide is Phospho-N-acetylmuramoyl-pentapeptide-transferase (Burkholderia mallei (strain NCTC 10247)).